We begin with the raw amino-acid sequence, 435 residues long: Casein kinase 1-like protein 12 (435 aa).

In terms of domain architecture, Protein kinase spans 9–278 (YRLGRKIGSG…LKRIFRDLFI (270 aa)). Residues 15-23 (IGSGSFGEI) and Lys-38 each bind ATP. The Proton acceptor role is filled by Asp-128. 2 disordered regions span residues 313 to 363 (VGTS…RGPM) and 394 to 414 (LRNS…TRKH).

This sequence belongs to the protein kinase superfamily. CK1 Ser/Thr protein kinase family. Casein kinase I subfamily. Monomer. Post-translationally, autophosphorylated.

It is found in the cytoplasm. It carries out the reaction L-seryl-[protein] + ATP = O-phospho-L-seryl-[protein] + ADP + H(+). It catalyses the reaction L-threonyl-[protein] + ATP = O-phospho-L-threonyl-[protein] + ADP + H(+). Its function is as follows. Casein kinases are operationally defined by their preferential utilization of acidic proteins such as caseins as substrates. It can phosphorylate a large number of proteins. This Arabidopsis thaliana (Mouse-ear cress) protein is Casein kinase 1-like protein 12.